Reading from the N-terminus, the 227-residue chain is UPF0173 metal-dependent hydrolase BALH_4194 (227 aa).

It belongs to the UPF0173 family.

The protein is UPF0173 metal-dependent hydrolase BALH_4194 of Bacillus thuringiensis (strain Al Hakam).